The primary structure comprises 393 residues: Bone morphogenetic protein 15 (393 aa).

Positions 1–25 are cleaved as a signal peptide; sequence MVLLSILRILLWGLVLFMEHRVQMT. Residues 26-268 constitute a propeptide that is removed on maturation; the sequence is QVGQPSIAHL…DPSLLLRRAR (243 aa). Residues N86 and N237 are each glycosylated (N-linked (GlcNAc...) asparagine). Intrachain disulfides connect C292-C358, C321-C390, and C325-C392. An N-linked (GlcNAc...) asparagine glycan is attached at N374.

It belongs to the TGF-beta family. In terms of assembly, homodimer. But, in contrast to other members of this family, cannot be disulfide-linked.

The protein localises to the secreted. Functionally, may be involved in follicular development. Oocyte-specific growth/differentiation factor that stimulates folliculogenesis and granulosa cell (GC) growth. The polypeptide is Bone morphogenetic protein 15 (BMP15) (Ovis aries (Sheep)).